A 90-amino-acid chain; its full sequence is Small ribosomal subunit protein bS20 (90 aa).

The protein belongs to the bacterial ribosomal protein bS20 family.

In terms of biological role, binds directly to 16S ribosomal RNA. This Rickettsia felis (strain ATCC VR-1525 / URRWXCal2) (Rickettsia azadi) protein is Small ribosomal subunit protein bS20.